A 345-amino-acid chain; its full sequence is MTDATSNLDSHGRPLGVLRLSLTARCNLACPYCCPDSRDPEGMLDLQDQLRLIRVACSLGVHTVRLTGGEPLLSDRLEPLLAAIALDRPAGLKELALTTNGVLLSPERALRLKCAGLDRITISLDGADAASVARMAGLQGGTPAGQSLLDQVLVGLEAARSAGFNSSHGALKLNAVIQKGRNDDQLIPLARLARDRGLELRLIEYMDVGSRNGWSLAQVMPAMEMVQCVSSHWPLDPVGRSSNSTTSRWRYRDGAGYIGVISSISAPFCGDCNRIRVTADGQVFTCLFASQGVDLRPYLRTDESETQLRECLSELWTRRSDRFSEERSLQIDKEKSHAEMAYLGG.

Residues 10–236 (SHGRPLGVLR…QCVSSHWPLD (227 aa)) enclose the Radical SAM core domain. Residue Arg-19 coordinates GTP. 2 residues coordinate [4Fe-4S] cluster: Cys-26 and Cys-30. Tyr-32 contributes to the S-adenosyl-L-methionine binding site. Residue Cys-33 coordinates [4Fe-4S] cluster. GTP is bound at residue Arg-65. Gly-69 serves as a coordination point for S-adenosyl-L-methionine. Thr-98 contributes to the GTP binding site. Residue Ser-123 participates in S-adenosyl-L-methionine binding. Position 172 (Lys-172) interacts with GTP. Residue Met-206 participates in S-adenosyl-L-methionine binding. [4Fe-4S] cluster-binding residues include Cys-269 and Cys-272. 274 to 276 (RIR) contributes to the GTP binding site. Cys-286 is a [4Fe-4S] cluster binding site.

It belongs to the radical SAM superfamily. MoaA family. Monomer and homodimer. [4Fe-4S] cluster is required as a cofactor.

It carries out the reaction GTP + AH2 + S-adenosyl-L-methionine = (8S)-3',8-cyclo-7,8-dihydroguanosine 5'-triphosphate + 5'-deoxyadenosine + L-methionine + A + H(+). Its pathway is cofactor biosynthesis; molybdopterin biosynthesis. In terms of biological role, catalyzes the cyclization of GTP to (8S)-3',8-cyclo-7,8-dihydroguanosine 5'-triphosphate. This Synechococcus sp. (strain CC9902) protein is GTP 3',8-cyclase.